Consider the following 72-residue polypeptide: Translation initiation factor IF-1 (72 aa).

Positions 1–72 (MAKEDTIQMQ…TRARIVFRAR (72 aa)) constitute an S1-like domain.

The protein belongs to the IF-1 family. As to quaternary structure, component of the 30S ribosomal translation pre-initiation complex which assembles on the 30S ribosome in the order IF-2 and IF-3, IF-1 and N-formylmethionyl-tRNA(fMet); mRNA recruitment can occur at any time during PIC assembly.

It localises to the cytoplasm. One of the essential components for the initiation of protein synthesis. Stabilizes the binding of IF-2 and IF-3 on the 30S subunit to which N-formylmethionyl-tRNA(fMet) subsequently binds. Helps modulate mRNA selection, yielding the 30S pre-initiation complex (PIC). Upon addition of the 50S ribosomal subunit IF-1, IF-2 and IF-3 are released leaving the mature 70S translation initiation complex. The polypeptide is Translation initiation factor IF-1 (Neisseria gonorrhoeae (strain ATCC 700825 / FA 1090)).